The sequence spans 186 residues: Hydra actinoporin-like toxin 6 (186 aa).

A signal peptide spans 1–21; the sequence is MLVYVCLVVILIQLPFGAAGG. A Cell attachment site motif is present at residues 158 to 160; the sequence is RAG.

The protein belongs to the actinoporin family. HALT subfamily. As to quaternary structure, octamer or nonamer in membranes. Monomer in the soluble state. In vitro, interacts with folate receptor alpha (of target organism). Expressed female germline during oogenesis.

It localises to the nematocyst. It is found in the secreted. Its subcellular location is the target cell membrane. In terms of biological role, pore-forming protein that forms hydrophilic pores and causes cytolysis. Compared to equinatoxin-2 (AC P61914), it reveals lower cytolysis activity (5-12-fold difference, tested on erythrocytes), a larger pore size (probably 2-3 nm) and different affinity to membrane lipids (100-fold lower affinity to sphingomyelin). Binds to sulfatides. Shows cytolytic activity on HeLa cells, with a different potency than its paralogs (from most potent to less potent: HALT-4&gt;HALT-6~HALT-1&gt;HALT-3&gt;HALT-7&gt;HALT-2). Pore formation is a multi-step process that involves specific recognition of membrane lipid by a protein aromatic residues rich region, firm binding to the membrane (mainly driven by hydrophobic interactions) accompanied by the transfer of the N-terminal region to the lipid-water interface and finally pore formation after oligomerization of monomers. In vitro, binds to the folate receptor alpha (FOLR1), a GPI-anchored membrane protein that plays a major role in the uptake of folate/folic acid into cells via endocytosis, suggesting a possible involvement of this receptor in the mechanism of HALT-1-induced cell lysis. In vivo, does not cause visible paralysis in larvae of the blowfly Sarcophaga faculata, the most common arthropod prey of Hydra. The sequence is that of Hydra actinoporin-like toxin 6 from Hydra vulgaris (Hydra).